Consider the following 469-residue polypeptide: 3-phosphoshikimate 1-carboxyvinyltransferase (469 aa).

Residues 21 to 45 form a disordered region; sequence KDTILTHSDQPRPLQSRANGPLTGK. The 3-phosphoshikimate site is built by K52, S53, and R57. Phosphoenolpyruvate is bound at residue K52. G125 and R153 together coordinate phosphoenolpyruvate. The 3-phosphoshikimate site is built by S199, Q201, D352, and K379. Residue Q201 participates in phosphoenolpyruvate binding. D352 acts as the Proton acceptor in catalysis. Positions 383 and 426 each coordinate phosphoenolpyruvate.

This sequence belongs to the EPSP synthase family. As to quaternary structure, monomer.

It is found in the cytoplasm. It catalyses the reaction 3-phosphoshikimate + phosphoenolpyruvate = 5-O-(1-carboxyvinyl)-3-phosphoshikimate + phosphate. The protein operates within metabolic intermediate biosynthesis; chorismate biosynthesis; chorismate from D-erythrose 4-phosphate and phosphoenolpyruvate: step 6/7. Catalyzes the transfer of the enolpyruvyl moiety of phosphoenolpyruvate (PEP) to the 5-hydroxyl of shikimate-3-phosphate (S3P) to produce enolpyruvyl shikimate-3-phosphate and inorganic phosphate. This Bradyrhizobium diazoefficiens (strain JCM 10833 / BCRC 13528 / IAM 13628 / NBRC 14792 / USDA 110) protein is 3-phosphoshikimate 1-carboxyvinyltransferase.